Reading from the N-terminus, the 249-residue chain is Acetylglutamate kinase (249 aa).

Substrate is bound by residues 42 to 43, arginine 64, and asparagine 155; that span reads GG.

The protein belongs to the acetylglutamate kinase family. ArgB subfamily.

It is found in the cytoplasm. The catalysed reaction is N-acetyl-L-glutamate + ATP = N-acetyl-L-glutamyl 5-phosphate + ADP. The protein operates within amino-acid biosynthesis; L-arginine biosynthesis; N(2)-acetyl-L-ornithine from L-glutamate: step 2/4. Functionally, catalyzes the ATP-dependent phosphorylation of N-acetyl-L-glutamate. In Endomicrobium trichonymphae, this protein is Acetylglutamate kinase.